An 882-amino-acid polypeptide reads, in one-letter code: Protein O-mannosyl-transferase TMTC1 (882 aa).

Topologically, residues 1–20 (MVVTTSARGGGGDRTPSRRR) are cytoplasmic. Positions 1 to 20 (MVVTTSARGGGGDRTPSRRR) are disordered. Residues 21 to 41 (GCGLAPAGAAALLAGASCLCY) traverse the membrane as a helical segment. Residues 42-110 (GRSLQGEFVH…KLNIFLTGMN (69 aa)) lie on the Extracellular side of the membrane. N-linked (GlcNAc...) asparagine glycosylation is present at Asn-86. Residues 111–131 (PFYFHAVNIILHCLVTLVLMY) traverse the membrane as a helical segment. At 132–137 (TCDKTV) the chain is on the cytoplasmic side. Residues 138-157 (FKNRGLAFVTALLFAVHPIH) traverse the membrane as a helical segment. The Extracellular portion of the chain corresponds to 158–160 (TEA). Residues 161–181 (VAGIVGRADVLACLLFLLAFL) form a helical membrane-spanning segment. At 182–197 (SYNRSLDQGCVGGSFP) the chain is on the cytoplasmic side. The chain crosses the membrane as a helical span at residues 198–218 (STVSPFFLLLSLFLGTCAMLV). The Extracellular segment spans residues 219-221 (KET). A helical membrane pass occupies residues 222 to 238 (GITVFGVCLVYDLFSLS). Over 239–313 (NKQDKSSNGA…SPRAVWSMMR (75 aa)) the chain is Cytoplasmic. Positions 246–277 (NGALCPRSPQQPGSPQPSSLPGHPHRENGKQQ) are disordered. A compositionally biased stretch (low complexity) spans 251–267 (PRSPQQPGSPQPSSLPG). A helical membrane pass occupies residues 314 to 334 (FLTYSYLLAFNVWLLLAPVTL). The Extracellular segment spans residues 335-354 (CYDWQVGSIPLVETIWDMRN). Residues 355-375 (LATIFLAVVMALLSLHCLAAF) form a helical membrane-spanning segment. The Cytoplasmic portion of the chain corresponds to 376-381 (KRLEHK). Residues 382 to 402 (EVLVGLLFLVFPFIPASNLFF) form a helical membrane-spanning segment. Residue Arg-403 is a topological domain, extracellular. Residues 404–424 (VGFVVAERVLYMPSMGYCILF) traverse the membrane as a helical segment. Topologically, residues 425-438 (VHGLSKLCTWLNRC) are cytoplasmic. A helical membrane pass occupies residues 439 to 459 (GATTLIVSTVLLLLLFSWKTV). Residues 460 to 882 (KQNEIWLSRE…LQEVREKDQT (423 aa)) are Extracellular-facing. TPR repeat units lie at residues 483–516 (AKVH…YPRH), 517–547 (ASAL…HPQH), 548–581 (NRAL…GPEF), 582–615 (ADAY…CPDS), 616–649 (SDLH…SPSH), 650–682 (HVAM…VAHK), 683–716 (AEIL…QPSQ), 751–784 (LECY…KPKD), 789–822 (SELF…NPDQ), and 823–856 (AQAW…VPDS).

Belongs to the TMTC family. In terms of assembly, may interact with FAM168B.

The protein resides in the membrane. The protein localises to the endoplasmic reticulum. It carries out the reaction a di-trans,poly-cis-dolichyl beta-D-mannosyl phosphate + L-seryl-[protein] = 3-O-(alpha-D-mannosyl)-L-seryl-[protein] + a di-trans,poly-cis-dolichyl phosphate + H(+). The catalysed reaction is a di-trans,poly-cis-dolichyl beta-D-mannosyl phosphate + L-threonyl-[protein] = 3-O-(alpha-D-mannosyl)-L-threonyl-[protein] + a di-trans,poly-cis-dolichyl phosphate + H(+). Its pathway is protein modification; protein glycosylation. Its function is as follows. Transfers mannosyl residues to the hydroxyl group of serine or threonine residues. The 4 members of the TMTC family are O-mannosyl-transferases dedicated primarily to the cadherin superfamily, each member seems to have a distinct role in decorating the cadherin domains with O-linked mannose glycans at specific regions. Also acts as O-mannosyl-transferase on other proteins such as PDIA3. This chain is Protein O-mannosyl-transferase TMTC1, found in Homo sapiens (Human).